The primary structure comprises 236 residues: Small ribosomal subunit protein uS3 (236 aa).

Residues 39–107 (IRKFLKREMY…EVFINIKEAK (69 aa)) enclose the KH type-2 domain. Basic and acidic residues predominate over residues 214-229 (PEKKEESKSGDKEVRS). The disordered stretch occupies residues 214-236 (PEKKEESKSGDKEVRSKSRRGRQ).

It belongs to the universal ribosomal protein uS3 family. Part of the 30S ribosomal subunit. Forms a tight complex with proteins S10 and S14.

In terms of biological role, binds the lower part of the 30S subunit head. Binds mRNA in the 70S ribosome, positioning it for translation. This Helicobacter hepaticus (strain ATCC 51449 / 3B1) protein is Small ribosomal subunit protein uS3.